Consider the following 162-residue polypeptide: Phosphopantetheine adenylyltransferase (162 aa).

Thr14 is a binding site for substrate. ATP-binding positions include 14 to 15 and His22; that span reads TF. Substrate-binding residues include Lys46, Leu78, and Arg92. Residues 93–95, Glu103, and 128–134 contribute to the ATP site; these read GLR and HSFISSS.

Belongs to the bacterial CoaD family. Homohexamer. Mg(2+) is required as a cofactor.

It localises to the cytoplasm. The enzyme catalyses (R)-4'-phosphopantetheine + ATP + H(+) = 3'-dephospho-CoA + diphosphate. It participates in cofactor biosynthesis; coenzyme A biosynthesis; CoA from (R)-pantothenate: step 4/5. Reversibly transfers an adenylyl group from ATP to 4'-phosphopantetheine, yielding dephospho-CoA (dPCoA) and pyrophosphate. This is Phosphopantetheine adenylyltransferase from Xylella fastidiosa (strain M23).